A 384-amino-acid polypeptide reads, in one-letter code: Queuine tRNA-ribosyltransferase (384 aa).

The active-site Proton acceptor is the aspartate 93. Residues 93-97 (DSGGF), aspartate 147, glutamine 202, and glycine 229 each bind substrate. Residues 260-266 (GVGYPEE) are RNA binding. Aspartate 279 functions as the Nucleophile in the catalytic mechanism. The tract at residues 284–288 (TRAAR) is RNA binding; important for wobble base 34 recognition. The Zn(2+) site is built by cysteine 317, cysteine 319, cysteine 322, and histidine 348.

It belongs to the queuine tRNA-ribosyltransferase family. As to quaternary structure, homodimer. Within each dimer, one monomer is responsible for RNA recognition and catalysis, while the other monomer binds to the replacement base PreQ1. Requires Zn(2+) as cofactor.

It carries out the reaction 7-aminomethyl-7-carbaguanine + guanosine(34) in tRNA = 7-aminomethyl-7-carbaguanosine(34) in tRNA + guanine. Its pathway is tRNA modification; tRNA-queuosine biosynthesis. Its function is as follows. Catalyzes the base-exchange of a guanine (G) residue with the queuine precursor 7-aminomethyl-7-deazaguanine (PreQ1) at position 34 (anticodon wobble position) in tRNAs with GU(N) anticodons (tRNA-Asp, -Asn, -His and -Tyr). Catalysis occurs through a double-displacement mechanism. The nucleophile active site attacks the C1' of nucleotide 34 to detach the guanine base from the RNA, forming a covalent enzyme-RNA intermediate. The proton acceptor active site deprotonates the incoming PreQ1, allowing a nucleophilic attack on the C1' of the ribose to form the product. After dissociation, two additional enzymatic reactions on the tRNA convert PreQ1 to queuine (Q), resulting in the hypermodified nucleoside queuosine (7-(((4,5-cis-dihydroxy-2-cyclopenten-1-yl)amino)methyl)-7-deazaguanosine). In Koribacter versatilis (strain Ellin345), this protein is Queuine tRNA-ribosyltransferase.